Here is a 571-residue protein sequence, read N- to C-terminus: GABA-specific permease (571 aa).

Over 1–73 (MSMSSKNENK…IGYKQELKRQ (73 aa)) the chain is Cytoplasmic. Residues 74–94 (FSTLQVFGIAFSIMGLLPSIA) form a helical membrane-spanning segment. Topologically, residues 95-105 (SVMGGGLGGGP) are vacuolar. The chain crosses the membrane as a helical span at residues 106–126 (ATLVWGWFVAAFFILLVGITM). The Cytoplasmic portion of the chain corresponds to 127–153 (AEHASSIPTAGGLYYWTYYYAPEGYKE). Residues 154 to 174 (IISFIIGCSNSLALAAGVCSI) form a helical membrane-spanning segment. The Vacuolar segment spans residues 175–198 (DYGLAEEIAAAVTLTKDGNFEVTS). Residues 199-219 (GKLYGIFAGAVVVMCICTCVA) traverse the membrane as a helical segment. The Cytoplasmic segment spans residues 220–228 (SGAIARLQT). A helical transmembrane segment spans residues 229–249 (LSIFANLFIIVLLFIALPIGT). Residues 250–271 (KHRMGGFNDGDFIFGKYENLSD) are Vacuolar-facing. The chain crosses the membrane as a helical span at residues 272 to 292 (WNNGWQFCLAGFMPAVWTIGS). Over 293 to 312 (FDSCVHQSEEAKDAKKSVPI) the chain is Cytoplasmic. A helical transmembrane segment spans residues 313 to 333 (GIISSIAVCWILGWLIIICLM). At 334–364 (ACINPDIDSVLDSKYGFALAQIIYDSLGKKW) the chain is on the vacuolar side. A helical membrane pass occupies residues 365–385 (AIAFMSLIAFCQFLMGASITT). Residues 386–416 (AVSRQVWAFSRDNGLPLSKYIKRVDSKYSVP) are Cytoplasmic-facing. The chain crosses the membrane as a helical span at residues 417–437 (FFAILAACVGSLILGLLCLID). The Vacuolar segment spans residues 438-441 (DAAT). Residues 442–462 (DALFSLAVAGNNLAWSTPTVF) form a helical membrane-spanning segment. Over 463–482 (RLTSGRDLFRPGPFYLGKIW) the chain is Cytoplasmic. A helical membrane pass occupies residues 483-503 (SPIVAWTGVAFQLFIIILVMF). The Vacuolar portion of the chain corresponds to 504-514 (PSQQHGITKST). A helical transmembrane segment spans residues 515–535 (MNYACVIGPGIWILAGIYYKV). Over 536–571 (YKKKYYHGPATNLSDDDYTEAVGADVIDTIMSKQEP) the chain is Cytoplasmic.

It belongs to the amino acid-polyamine-organocation (APC) superfamily. Amino acid/choline transporter (ACT) (TC 2.A.3.4) family.

The protein localises to the vacuole membrane. In terms of biological role, required for high-affinity, high-specificity GABA transport. Also transports putrescine. The chain is GABA-specific permease (UGA4) from Saccharomyces cerevisiae (strain ATCC 204508 / S288c) (Baker's yeast).